The sequence spans 556 residues: Mitochondrial distribution and morphology protein 34-2 (556 aa).

An SMP-LTD domain is found at Met1–Leu195. Disordered stretches follow at residues Glu206–Gly239, Thr299–Pro423, and His440–Pro473. Residues Thr299–Ala333 are compositionally biased toward polar residues. The span at Ser334 to Ser357 shows a compositional bias: low complexity. Basic residues predominate over residues Arg362–Arg374. The segment covering Val375–Asp385 has biased composition (basic and acidic residues). Over residues Ser391 to Pro402 the composition is skewed to polar residues. Residues Glu459–Asp468 show a composition bias toward basic and acidic residues.

This sequence belongs to the MDM34 family. As to quaternary structure, component of the ER-mitochondria encounter structure (ERMES) or MDM complex, composed of mmm1, mdm10, mdm12 and mdm34.

Its subcellular location is the mitochondrion outer membrane. Component of the ERMES/MDM complex, which serves as a molecular tether to connect the endoplasmic reticulum (ER) and mitochondria. Components of this complex are involved in the control of mitochondrial shape and protein biogenesis, and function in nonvesicular lipid trafficking between the ER and mitochondria. Mdm34 is required for the interaction of the ER-resident membrane protein mmm1 and the outer mitochondrial membrane-resident beta-barrel protein mdm10. The chain is Mitochondrial distribution and morphology protein 34-2 from Penicillium rubens (strain ATCC 28089 / DSM 1075 / NRRL 1951 / Wisconsin 54-1255) (Penicillium chrysogenum).